The primary structure comprises 44 residues: Photosystem I reaction center subunit IX (44 aa).

Residues 7–27 traverse the membrane as a helical segment; the sequence is YLSVAPVLSTLWFGSLAGLLI.

It belongs to the PsaJ family.

Its subcellular location is the plastid. It localises to the chloroplast thylakoid membrane. May help in the organization of the PsaE and PsaF subunits. This chain is Photosystem I reaction center subunit IX, found in Fagopyrum esculentum subsp. ancestrale (Wild buckwheat).